The chain runs to 444 residues: Trigger factor (444 aa).

Positions 160–245 (DMQVTFDFEG…VKQVEKPKLP (86 aa)) constitute a PPIase FKBP-type domain.

The protein belongs to the FKBP-type PPIase family. Tig subfamily.

Its subcellular location is the cytoplasm. The enzyme catalyses [protein]-peptidylproline (omega=180) = [protein]-peptidylproline (omega=0). Involved in protein export. Acts as a chaperone by maintaining the newly synthesized protein in an open conformation. Functions as a peptidyl-prolyl cis-trans isomerase. This is Trigger factor from Acinetobacter baumannii (strain SDF).